A 364-amino-acid polypeptide reads, in one-letter code: MRTDLFDFHLPPENIALRPASPREAARMLVVQGDGVLRDRIVADLPDWLEPGDQLVVNDTKVIAAQLSGRRVSRETEAKIEATLIKRLDGSRWQALVRPAKKLAPGDTIRFGHEGKVCLLGHLDATVEAKGEEGEVTLSFVFHGPALDQAIADLGRPPLPPYIAGKRPADEQDAADYQTMFAAKEGAVAAPTAGLHFTPALEQRLRARGVGLQRVTLHVGAGTFLPVKVEDTEGHRMHAEWGSLSAETAAALNEARAKGGRIVAVGTTSMRLLESAALPDGTIAPFEAETSIFITPGYRFRAVDILMTNFHLPRSTLFMLVSAFAGLETMQAAYAHAIRSGYRFYSYGDACLLFRQPDERIVEP.

Belongs to the QueA family. In terms of assembly, monomer.

Its subcellular location is the cytoplasm. The enzyme catalyses 7-aminomethyl-7-carbaguanosine(34) in tRNA + S-adenosyl-L-methionine = epoxyqueuosine(34) in tRNA + adenine + L-methionine + 2 H(+). It participates in tRNA modification; tRNA-queuosine biosynthesis. Functionally, transfers and isomerizes the ribose moiety from AdoMet to the 7-aminomethyl group of 7-deazaguanine (preQ1-tRNA) to give epoxyqueuosine (oQ-tRNA). This is S-adenosylmethionine:tRNA ribosyltransferase-isomerase from Bradyrhizobium sp. (strain BTAi1 / ATCC BAA-1182).